The following is a 955-amino-acid chain: RNA polymerase-associated protein RapA (955 aa).

In terms of domain architecture, Helicase ATP-binding spans 163–333 (EVGHRYAPRV…FARLRLLDPE (171 aa)). Residue 176 to 183 (DEVGLGKT) coordinates ATP. The DEAH box motif lies at 279 to 282 (DEAH). Residues 478–642 (RVDWLLELLL…AVRDELFELL (165 aa)) form the Helicase C-terminal domain.

It belongs to the SNF2/RAD54 helicase family. RapA subfamily. Interacts with the RNAP. Has a higher affinity for the core RNAP than for the holoenzyme. Its ATPase activity is stimulated by binding to RNAP.

Transcription regulator that activates transcription by stimulating RNA polymerase (RNAP) recycling in case of stress conditions such as supercoiled DNA or high salt concentrations. Probably acts by releasing the RNAP, when it is trapped or immobilized on tightly supercoiled DNA. Does not activate transcription on linear DNA. Probably not involved in DNA repair. The chain is RNA polymerase-associated protein RapA from Aeromonas salmonicida (strain A449).